Here is a 488-residue protein sequence, read N- to C-terminus: Glutamyl-tRNA(Gln) amidotransferase subunit A (488 aa).

Active-site charge relay system residues include Lys-77 and Ser-152. Ser-176 functions as the Acyl-ester intermediate in the catalytic mechanism.

The protein belongs to the amidase family. GatA subfamily. Heterotrimer of A, B and C subunits.

The enzyme catalyses L-glutamyl-tRNA(Gln) + L-glutamine + ATP + H2O = L-glutaminyl-tRNA(Gln) + L-glutamate + ADP + phosphate + H(+). Its function is as follows. Allows the formation of correctly charged Gln-tRNA(Gln) through the transamidation of misacylated Glu-tRNA(Gln) in organisms which lack glutaminyl-tRNA synthetase. The reaction takes place in the presence of glutamine and ATP through an activated gamma-phospho-Glu-tRNA(Gln). This is Glutamyl-tRNA(Gln) amidotransferase subunit A from Streptococcus agalactiae serotype III (strain NEM316).